A 208-amino-acid chain; its full sequence is Protein-L-isoaspartate O-methyltransferase (208 aa).

S59 is an active-site residue.

The protein belongs to the methyltransferase superfamily. L-isoaspartyl/D-aspartyl protein methyltransferase family.

The protein resides in the cytoplasm. The catalysed reaction is [protein]-L-isoaspartate + S-adenosyl-L-methionine = [protein]-L-isoaspartate alpha-methyl ester + S-adenosyl-L-homocysteine. Its function is as follows. Catalyzes the methyl esterification of L-isoaspartyl residues in peptides and proteins that result from spontaneous decomposition of normal L-aspartyl and L-asparaginyl residues. It plays a role in the repair and/or degradation of damaged proteins. The protein is Protein-L-isoaspartate O-methyltransferase of Vibrio campbellii (strain ATCC BAA-1116).